A 596-amino-acid polypeptide reads, in one-letter code: Elongation factor 4 (596 aa).

The tr-type G domain maps to lysine 2–glutamate 184. GTP is bound by residues aspartate 14 to threonine 19 and asparagine 131 to aspartate 134.

It belongs to the TRAFAC class translation factor GTPase superfamily. Classic translation factor GTPase family. LepA subfamily.

Its subcellular location is the cell inner membrane. The catalysed reaction is GTP + H2O = GDP + phosphate + H(+). Functionally, required for accurate and efficient protein synthesis under certain stress conditions. May act as a fidelity factor of the translation reaction, by catalyzing a one-codon backward translocation of tRNAs on improperly translocated ribosomes. Back-translocation proceeds from a post-translocation (POST) complex to a pre-translocation (PRE) complex, thus giving elongation factor G a second chance to translocate the tRNAs correctly. Binds to ribosomes in a GTP-dependent manner. The chain is Elongation factor 4 from Shewanella sediminis (strain HAW-EB3).